We begin with the raw amino-acid sequence, 666 residues long: Threonine--tRNA ligase (666 aa).

In terms of domain architecture, TGS spans 1 to 64 (MSDTVSLTFP…VDGKIEIVTR (64 aa)). Residues 245 to 553 (DHRKLGREMD…LIENFAGHMP (309 aa)) are catalytic. C347, H398, and H530 together coordinate Zn(2+).

Belongs to the class-II aminoacyl-tRNA synthetase family. Homodimer. Requires Zn(2+) as cofactor.

The protein localises to the cytoplasm. It carries out the reaction tRNA(Thr) + L-threonine + ATP = L-threonyl-tRNA(Thr) + AMP + diphosphate + H(+). Catalyzes the attachment of threonine to tRNA(Thr) in a two-step reaction: L-threonine is first activated by ATP to form Thr-AMP and then transferred to the acceptor end of tRNA(Thr). Also edits incorrectly charged L-seryl-tRNA(Thr). The sequence is that of Threonine--tRNA ligase from Allorhizobium ampelinum (strain ATCC BAA-846 / DSM 112012 / S4) (Agrobacterium vitis (strain S4)).